Here is a 401-residue protein sequence, read N- to C-terminus: MFERFLSTETKYLRTSEIRDLLKLTEGKNVISLAGGLPDPQTFPVEEIKKIADDILLNSADKALQYTATAGISEFRRELVNLSRLRGISGIDERNVFVTVGSQEALFMIFNILLDPGDNVVVEAPTYLAALNAMRTRKPNFISITVTEMGPDLDELERKIKDAHSNGKKVKLMYVIPTAQNPAGTTMNTEDRKRLLEIASKYDFLIFEDDAYGFLVFEGESPPPIKAFDKEGRVIYTSTFSKILAPGLRLGWVIAHEDFIKEMELYKQNVDLHTPSLSQYIAMEAIRRGIIQNNLPKIRRVYKEKRDVMLEAIETYFPNDARWTKPVGGMFVFAWLPQKIDTTKMLEKALQRGVAYVPGSSFYADYSGKNTMRINFSFPKKEELIEGIKRLGDTIKHELST.

K242 bears the N6-(pyridoxal phosphate)lysine mark.

Belongs to the class-I pyridoxal-phosphate-dependent aminotransferase family. As to quaternary structure, homodimer. The cofactor is pyridoxal 5'-phosphate.

The protein resides in the cytoplasm. This is an uncharacterized protein from Saccharolobus solfataricus (strain ATCC 35092 / DSM 1617 / JCM 11322 / P2) (Sulfolobus solfataricus).